A 344-amino-acid polypeptide reads, in one-letter code: MNTKTVKSMAGIVLSQISLVALFPLCICYQTHQSTSSVASLSPQFYENSCPNAQAIVQSYVANAYFNDPRMAASILRLHFHDCFVNGCDASVLLDSSGTMESEKRSNANRDSARGFEVIDEIKSALENECPETVSCADLLALVARDSIVICGGPSWEVYLGRRDAREASLIGSMENIPSPESTLQTILTMFNFQGLDLTDLVALLGSHTIGNSRCIGFRQRLYNHTGNNDPDQTLNQDYASMLQQGCPISGNDQNLFNLDYVTPTKFDNYYYKNLVNFRGLLSSDEILFTQSIETMEMVKYYAENEGAFFEQFAKSMVKMGNISPLTGTDGEIRRICRRVNHDV.

Positions 1-28 are cleaved as a signal peptide; it reads MNTKTVKSMAGIVLSQISLVALFPLCIC. Intrachain disulfides connect Cys-50–Cys-130, Cys-83–Cys-88, Cys-136–Cys-337, and Cys-215–Cys-247. The active-site Proton acceptor is the His-81. Ca(2+)-binding residues include Asp-82, Val-85, Gly-87, Asp-89, and Ser-91. Position 178 (Pro-178) interacts with substrate. Position 208 (His-208) interacts with heme b. Residue Thr-209 participates in Ca(2+) binding. Residue Asn-224 is glycosylated (N-linked (GlcNAc...) asparagine). Ca(2+)-binding residues include Asp-260, Thr-263, and Asp-268.

Belongs to the peroxidase family. Classical plant (class III) peroxidase subfamily. Requires heme b as cofactor. Ca(2+) is required as a cofactor.

The protein localises to the secreted. It carries out the reaction 2 a phenolic donor + H2O2 = 2 a phenolic radical donor + 2 H2O. Its function is as follows. Removal of H(2)O(2), oxidation of toxic reductants, biosynthesis and degradation of lignin, suberization, auxin catabolism, response to environmental stresses such as wounding, pathogen attack and oxidative stress. These functions might be dependent on each isozyme/isoform in each plant tissue. The chain is Peroxidase 36 (PER36) from Arabidopsis thaliana (Mouse-ear cress).